Reading from the N-terminus, the 480-residue chain is Protein nucleotidyltransferase YdiU (480 aa).

The ATP site is built by glycine 87, glycine 89, arginine 90, lysine 110, aspartate 122, glycine 123, arginine 173, and arginine 180. Aspartate 249 acts as the Proton acceptor in catalysis. 2 residues coordinate Mg(2+): asparagine 250 and aspartate 259. Residue aspartate 259 participates in ATP binding.

The protein belongs to the SELO family. It depends on Mg(2+) as a cofactor. The cofactor is Mn(2+).

The enzyme catalyses L-seryl-[protein] + ATP = 3-O-(5'-adenylyl)-L-seryl-[protein] + diphosphate. It catalyses the reaction L-threonyl-[protein] + ATP = 3-O-(5'-adenylyl)-L-threonyl-[protein] + diphosphate. It carries out the reaction L-tyrosyl-[protein] + ATP = O-(5'-adenylyl)-L-tyrosyl-[protein] + diphosphate. The catalysed reaction is L-histidyl-[protein] + UTP = N(tele)-(5'-uridylyl)-L-histidyl-[protein] + diphosphate. The enzyme catalyses L-seryl-[protein] + UTP = O-(5'-uridylyl)-L-seryl-[protein] + diphosphate. It catalyses the reaction L-tyrosyl-[protein] + UTP = O-(5'-uridylyl)-L-tyrosyl-[protein] + diphosphate. Its function is as follows. Nucleotidyltransferase involved in the post-translational modification of proteins. It can catalyze the addition of adenosine monophosphate (AMP) or uridine monophosphate (UMP) to a protein, resulting in modifications known as AMPylation and UMPylation. This is Protein nucleotidyltransferase YdiU from Anoxybacillus flavithermus (strain DSM 21510 / WK1).